Consider the following 196-residue polypeptide: MNPAHEPLPLEFYNKPTIELARSLLGCLLVKETEEGPASGYIVETEAYKGPGDRAAHSYGNRRTKRTEIMYREAGVVYTYTMHTHTLINVVSGGADEPEAVLIRALEPHEGLALMEKRRSGKKPRDWTNGPGKLTKALSITMNDYGRPLTGPPLYIAKGYEPQDILSGPRIGIDNSGEAREYPWRFWIKGNRYVSR.

It belongs to the DNA glycosylase MPG family.

This chain is Putative 3-methyladenine DNA glycosylase, found in Bacillus licheniformis (strain ATCC 14580 / DSM 13 / JCM 2505 / CCUG 7422 / NBRC 12200 / NCIMB 9375 / NCTC 10341 / NRRL NRS-1264 / Gibson 46).